The sequence spans 167 residues: Peptidoglycan L-alanyl-D-glutamate endopeptidase CwlK (167 aa).

Positions 1–26 are cleaved as a signal peptide; it reads MNLPAKTFVILCILFLLDLCFSYIRH.

It belongs to the peptidase M15C family.

It localises to the cell membrane. Functionally, cleaves the linkage of the L-alanine-D-glutamic acid of B.subtilis cell wall. This Bacillus subtilis (strain 168) protein is Peptidoglycan L-alanyl-D-glutamate endopeptidase CwlK (cwlK).